The following is an 89-amino-acid chain: Small ribosomal subunit protein uS15 (89 aa).

The protein belongs to the universal ribosomal protein uS15 family. As to quaternary structure, part of the 30S ribosomal subunit. Forms a bridge to the 50S subunit in the 70S ribosome, contacting the 23S rRNA.

In terms of biological role, one of the primary rRNA binding proteins, it binds directly to 16S rRNA where it helps nucleate assembly of the platform of the 30S subunit by binding and bridging several RNA helices of the 16S rRNA. Forms an intersubunit bridge (bridge B4) with the 23S rRNA of the 50S subunit in the ribosome. The chain is Small ribosomal subunit protein uS15 from Mycobacteroides abscessus (strain ATCC 19977 / DSM 44196 / CCUG 20993 / CIP 104536 / JCM 13569 / NCTC 13031 / TMC 1543 / L948) (Mycobacterium abscessus).